Reading from the N-terminus, the 1069-residue chain is RE1-silencing transcription factor (1069 aa).

Residues 32-121 form an interaction with SIN3A region; sequence DLHDLSKAEL…SLELSVVEPQ (90 aa). The interval 43 to 57 is interaction with SIN3B; the sequence is APQLIMLANVALTGE. The segment at 85–104 is disordered; the sequence is SDSEGEGLEESAELKGDPSG. The interaction with ZFP90 stretch occupies residues 144–417; sequence PVAEDKCKNL…KSKHPTCPSK (274 aa). A C2H2-type 1 zinc finger spans residues 158 to 180; sequence FRCKPCQYEAESEEQFVHHIRVH. The segment at 200–211 is required for binding to the neuron-restrictive silencer element; that stretch reads SGASPSEEGEFS. C2H2-type zinc fingers lie at residues 215–237, 247–269, 275–297, 303–325, 331–354, 360–382, and 388–411; these read IRCD…LKHH, YKCI…LRNH, YTCS…VRTH, YKCE…MRTH, FKCD…RQVH, LNCP…VELH, and FNCP…KSKH. 2 disordered regions span residues 425–737 and 830–1022; these read KLKK…MELP and KASK…GKEG. A compositionally biased stretch (basic and acidic residues) spans 451–482; that stretch reads EQAKTKGVDASARRSERPVKGVGKDVPKEKKP. Positions 484–493 are enriched in polar residues; sequence SNASVVQVTT. Basic and acidic residues-rich tracts occupy residues 498 to 511 and 554 to 576; these read SAVE…KHTD and ESKP…KADK. Residues 584 to 600 show a composition bias toward basic residues; sequence KGGKKTALKTKTAKKGS. A compositionally biased stretch (polar residues) spans 630-643; sequence AVVTPSGSTQTELS. Pro residues-rich tracts occupy residues 679–706 and 713–734; these read PSPP…PCPM and PSPP…PLPM. Composition is skewed to basic and acidic residues over residues 851–860 and 876–886; these read RREETPKDQE and GGTEEAGESRA. A compositionally biased stretch (low complexity) spans 894–904; that stretch reads STSALSSEQSS. A compositionally biased stretch (basic and acidic residues) spans 930–943; that stretch reads TEQKTDRVPLKDSA. The residue at position 948 (Ser948) is a Phosphoserine. A compositionally biased stretch (low complexity) spans 957-968; that stretch reads EAAAPAVVASPP. An interaction with RCOR1 region spans residues 981-1059; sequence EGIHSHDGSD…HLNRHLVNVY (79 aa). A C2H2-type 9 zinc finger spans residues 1032–1054; that stretch reads FVCIFCDRSFRKEKDYSKHLNRH.

As to quaternary structure, isoform 1 and isoform 6 form heterodimers. Isoform 6: Forms homodimers and homooligomers; binds to the neuron-restrictive silencer element (NRSE) as monomer. Interacts with SIN3A, SIN3B and RCOR1. Interacts with CDYL. Interacts with EHMT1 and EHMT2 only in the presence of CDYL. Part of a complex containing at least CDYL, REST, WIZ, SETB1, EHMT1 and EHMT2. Interacts (via zinc-finger DNA-binding domain) with ZFP90 (via N- and C-termini); the interaction inhibits REST repressor activity. Interacts (via C2H2-type zinc finger 5) with PRICKLE1. Interacts with FBXW11 and BTRC. Interacts with USP7. Post-translationally, O-glycosylated. Phosphorylated; phosphorylation is required for ubiquitination. In terms of processing, ubiquitinated; ubiquitination is mediated by BTRC and leads to proteasomal degradation in G2 phase. Ubiquitination increases during neuronal differentiation. Deubiquitinated by USP7; leading to its stabilization and promoting the maintenance of neural progenitor cells. As to expression, expressed in the hippocampus including the granule cell layer of the dentate gyrus, the pyramidal cell layers of CA1 and CA3, the apical and basilar dendrite layers of the stratum radiatum and stratum oriens of CA1, the stratum lucidum and stratum oriens of CA3 and in astroglia (at protein level). Expressed in the brain, with the highest levels in the neurons of hippocampus, pons/medulla and midbrain.

The protein localises to the nucleus. The protein resides in the cytoplasm. Functionally, transcriptional repressor which binds neuron-restrictive silencer element (NRSE) and represses neuronal gene transcription in non-neuronal cells. Restricts the expression of neuronal genes by associating with two distinct corepressors, SIN3A and RCOR1, which in turn recruit histone deacetylase to the promoters of REST-regulated genes. Mediates repression by recruiting the BHC complex at RE1/NRSE sites which acts by deacetylating and demethylating specific sites on histones, thereby acting as a chromatin modifier. Transcriptional repression by REST-CDYL via the recruitment of histone methyltransferase EHMT2 may be important in transformation suppression. Represses the expression of SRRM4 in non-neural cells to prevent the activation of neural-specific splicing events and to prevent production of REST isoform 6. Repressor activity may be inhibited by forming heterodimers with isoform 6, thereby preventing binding to NRSE or binding to corepressors and leading to derepression of target genes. Also maintains repression of neuronal genes in neural stem cells, and allows transcription and differentiation into neurons by dissociation from RE1/NRSE sites of target genes. Thereby is involved in maintaining the quiescent state of adult hippocampal neural stem cells and preventing premature differentiation into mature neurons. Plays a role in the developmental switch in synaptic NMDA receptor composition during postnatal development, by repressing GRIN2B expression and thereby altering NMDA receptor properties from containing primarily GRIN2B to primarily GRIN2A subunits. Acts as a regulator of osteoblast differentiation. Key repressor of gene expression in hypoxia; represses genes in hypoxia by direct binding to an RE1/NRSE site on their promoter regions. May also function in stress resistance in the brain during aging; possibly by regulating expression of genes involved in cell death and in the stress response. Repressor of gene expression in the hippocampus after ischemia by directly binding to RE1/NRSE sites and recruiting SIN3A and RCOR1 to promoters of target genes, thereby promoting changes in chromatin modifications and ischemia-induced cell death. After ischemia, might play a role in repression of miR-132 expression in hippocampal neurons, thereby leading to neuronal cell death. Binds to the 3' region of the neuron-restrictive silencer element (NRSE), with lower affinity than full-length REST isoform 1. Exhibits weaker repressor activity compared to isoform 1. May negatively regulate the repressor activity of isoform 1 by binding to isoform 1, thereby preventing its binding to NRSE and leading to derepression of target genes. However, in another study, does not appear to be implicated in repressor activity of a NRSE motif-containing reporter construct nor in inhibitory activity on the isoform 1 transcriptional repressor activity. Post-transcriptional inactivation of REST by SRRM4-dependent alternative splicing into isoform 6 is required in mechanosensory hair cells in the inner ear for derepression of neuronal genes and hearing. This chain is RE1-silencing transcription factor (Rest), found in Rattus norvegicus (Rat).